Reading from the N-terminus, the 366-residue chain is 3-dehydroquinate synthase (366 aa).

NAD(+) contacts are provided by residues 107 to 111 (GVIGD), 131 to 132 (TS), K144, and K153. E186, H251, and H268 together coordinate Zn(2+).

This sequence belongs to the sugar phosphate cyclases superfamily. Dehydroquinate synthase family. It depends on Co(2+) as a cofactor. Requires Zn(2+) as cofactor. NAD(+) is required as a cofactor.

The protein resides in the cytoplasm. It catalyses the reaction 7-phospho-2-dehydro-3-deoxy-D-arabino-heptonate = 3-dehydroquinate + phosphate. Its pathway is metabolic intermediate biosynthesis; chorismate biosynthesis; chorismate from D-erythrose 4-phosphate and phosphoenolpyruvate: step 2/7. Its function is as follows. Catalyzes the conversion of 3-deoxy-D-arabino-heptulosonate 7-phosphate (DAHP) to dehydroquinate (DHQ). This is 3-dehydroquinate synthase from Rippkaea orientalis (strain PCC 8801 / RF-1) (Cyanothece sp. (strain PCC 8801)).